The primary structure comprises 154 residues: UPF0178 protein Sala_2376 (154 aa).

This sequence belongs to the UPF0178 family.

This chain is UPF0178 protein Sala_2376, found in Sphingopyxis alaskensis (strain DSM 13593 / LMG 18877 / RB2256) (Sphingomonas alaskensis).